The primary structure comprises 1414 residues: Phenyloxazoline synthase MbtB (1414 aa).

Positions 5–78 (TACSEIIRAE…AWSQLVSAGT (74 aa)) constitute a Carrier 1 domain. S39 carries the O-(pantetheine 4'-phosphoryl)serine modification. Residues 96-394 (EGEPFPLAPM…SSLLLDVDLT (299 aa)) form a condensation/cyclization region. Residues 579–975 (SYAQLRDQAS…RLPGVHAAAA (397 aa)) are adenylation. The Carrier 2 domain occupies 1057-1135 (APRTVLQRAL…ALAQLLTGRE (79 aa)). Position 1094 is an O-(pantetheine 4'-phosphoryl)serine (S1094). Positions 1188 to 1413 (GAVLVFPHAG…AVARMVSADV (226 aa)) are thioesterase.

This sequence belongs to the ATP-dependent AMP-binding enzyme family. MbtB subfamily. Pantetheine 4'-phosphate serves as cofactor. In terms of processing, 4'-phosphopantetheine is transferred from CoA to a specific serine in each of the two carrier protein domains, leading to their activation from apo to holo forms.

Its pathway is siderophore biosynthesis; mycobactin biosynthesis. Its function is as follows. Involved in the initial steps of the mycobactin biosynthetic pathway. Putatively couples activated salicylic acid with serine or threonine and cyclizes this precursor to the hydroxyphenyloxazoline ring system present in this class of siderophores. This is Phenyloxazoline synthase MbtB (mbtB) from Mycobacterium bovis (strain ATCC BAA-935 / AF2122/97).